The sequence spans 99 residues: MSGRKETVLDLAKFVDKGVQVKLTGGRQVTGTLKGYDQLLNLVLDEAVEFVRDHDDPLKTTDQTRRLGLIVCRGTAVMLVSPTDGTEEIANPFVTAEAV.

The Sm domain maps to 6-86 (ETVLDLAKFV…VMLVSPTDGT (81 aa)).

Belongs to the snRNP Sm proteins family. Component of the heptameric LSM1-LSM7 complex that forms a seven-membered ring structure with a donut shape. The LSM subunits are arranged in the order LSM1, LSM2, LSM3, LSM6, LSM5, LSM7 and LSM4. Component of the heptameric LSM2-LSM8 complex that forms a seven-membered ring structure with a donut shape. The LSM subunits are arranged in the order LSM8, LSM2, LSM3, LSM6, LSM5, LSM7 and LSM4. LSM7 subunit interacts only with its two neighboring subunits, LSM5 and LSM4. Expressed in roots, leaves, stems, flowers and siliques.

The protein localises to the cytoplasm. It is found in the nucleus. Functionally, component of LSM protein complexes, which are involved in RNA processing. Component of the cytoplasmic LSM1-LSM7 complex which is involved in mRNA degradation by promoting decapping and leading to accurate 5'-3' mRNA decay. The cytoplasmic LSM1-LSM7 complex regulates developmental gene expression by the decapping of specific development-related transcripts. Component of the nuclear LSM2-LSM8 complex which is involved splicing nuclear mRNAs. LSM2-LSM8 binds directly to the U6 small nuclear RNAs (snRNAs) and is essential for accurate splicing of selected development-related mRNAs through the stabilization of the spliceosomal U6 snRNA. Plays a critical role in the regulation of development-related gene expression. The sequence is that of Sm-like protein LSM7 from Arabidopsis thaliana (Mouse-ear cress).